The following is a 58-amino-acid chain: Metallothionein-1 (58 aa).

The tract at residues 1-28 (PGPCCNDKCVCKEGGCKEGCQCTSCRCS) is beta. Cys-4, Cys-5, Cys-9, Cys-11, Cys-16, Cys-20, Cys-22, Cys-25, Cys-27, Cys-30, Cys-33, Cys-37, Cys-39, Cys-45, Cys-49, Cys-53, Cys-55, and Cys-56 together coordinate a divalent metal cation. Positions 29–58 (PCEKCSSGCKCANKEECSKTCSKACSCCPT) are alpha.

It belongs to the metallothionein superfamily. Type 3 family.

Its function is as follows. Metallothioneins have a high content of cysteine residues that bind various heavy metals. Class I MTS in marine crustacea are involved in the sequestration of elevated levels of heavy-metal ions. The protein is Metallothionein-1 of Scylla serrata (Mud crab).